We begin with the raw amino-acid sequence, 37 residues long: Large ribosomal subunit protein bL36 (37 aa).

The protein belongs to the bacterial ribosomal protein bL36 family.

In Mycobacterium tuberculosis (strain ATCC 25618 / H37Rv), this protein is Large ribosomal subunit protein bL36 (rpmJ).